The primary structure comprises 328 residues: Radiation response metalloprotease IrrE (328 aa).

Residues 1-31 form a disordered region; it reads MPSANVSPPCPSGVRGGGMGPKAKAEASKPH. His-118 provides a ligand contact to Zn(2+). Glu-119 is an active-site residue. The Zn(2+) site is built by His-122 and Glu-149. Disordered stretches follow at residues 217 to 238 and 309 to 328; these read PREQ…LTVR and RLGR…DAAQ.

Its function is as follows. Plays a central regulatory role in DNA repair and protection pathways in response to radiation stress. Acts as a site-specific metalloprotease that cleaves and inactivates the repressor protein DdrO, resulting in induced expression of genes required for DNA repair and cell survival after exposure to radiation. Regulates the expression of dozens of proteins from different pathways, including the important DNA repair proteins RecA and PprA. Binds to the promoters of recA and pprA. In Deinococcus radiodurans (strain ATCC 13939 / DSM 20539 / JCM 16871 / CCUG 27074 / LMG 4051 / NBRC 15346 / NCIMB 9279 / VKM B-1422 / R1), this protein is Radiation response metalloprotease IrrE.